A 302-amino-acid chain; its full sequence is Stanniocalcin-2 (302 aa).

Residues 1 to 24 form the signal peptide; it reads MCAERLGQFMTLALVLATFDPARG. The tract at residues 23 to 44 is disordered; sequence RGTDATNPPEGPQDRSPQQKGR. Residues Asn73 and Asn74 are each glycosylated (N-linked (GlcNAc...) asparagine). A disordered region spans residues 217 to 302; it reads RPPTAPPERQ…EQSEYSDIRR (86 aa). Residues 227–264 are compositionally biased toward basic and acidic residues; it reads PQVDRTKLSRAHHGEAGHHLPEPSSRETGRGAKGERGS. Phosphoserine occurs at positions 250 and 251. Thr254 is subject to Phosphothreonine.

Belongs to the stanniocalcin family. Homodimer; disulfide-linked.

It is found in the secreted. Its function is as follows. Has an anti-hypocalcemic action on calcium and phosphate homeostasis. The chain is Stanniocalcin-2 (STC2) from Pongo abelii (Sumatran orangutan).